The following is a 514-amino-acid chain: uncharacterized protein (514 aa).

This sequence to E.coli YjjI.

This is an uncharacterized protein from Haemophilus influenzae (strain ATCC 51907 / DSM 11121 / KW20 / Rd).